Reading from the N-terminus, the 259-residue chain is Transmembrane protein 81 (259 aa).

The N-terminal stretch at 1-18 (MALSTLWLVLMLWTSLFS) is a signal peptide. Topologically, residues 19–221 (DSQCSTLSQA…KVYSSSTIRN (203 aa)) are extracellular. The Ig-like domain occupies 97 to 172 (GRRLVLDCLE…VLDTGKRRVK (76 aa)). The cysteines at positions 104 and 161 are disulfide-linked. A helical transmembrane segment spans residues 222–242 (IVIISVPLSFAIAVVIFIFLF). At 243 to 259 (CYSRRARRAAHLCQDNI) the chain is on the cytoplasmic side.

Forms a complex with izumo1 and spaca6 on spermatocyte cell membrane. The complex binds to oocyte protein bncr. As to expression, expressed in sperm.

It is found in the cell membrane. Essential fertilization factor required for male fertility. Part of a conserved trimeric sperm complex with the essential fertilization factors IZUMO1 and SPACA6 which bridges sperm and oocyte membranes during fertilization by binding to IZUMO1R/JUNO on the oocyte. The sequence is that of Transmembrane protein 81 from Danio rerio (Zebrafish).